Here is a 349-residue protein sequence, read N- to C-terminus: MKLTKLALCTLFGLGVSIANAADLPNITILATGGTIAGSGQSSVNSAYKAGQLSIDTLIEAVPEMKNIANIKGEQIVKIGSQDMNDEVWLKLAKAINAQCKSTDGFVITHGTDTMEETAYFLDLTVKCEKPVVLVGAMRPATEKSADGPLNLYNAVVVAADKKSSGRGVLVAMNNEVLGARDVTKTSTTAVQTFHSPNYGSLGYIHNSKVDYERSPESKHTINTPFNVEKLDSLPKVGIIYAYSNAPVEPLNALLNAGYQGIVSAGVGNGNVNAAHLDRLEKAAKDSVVVVRSSRVPTGYTTRDAEVDDSKYGFVASGTLNPQKARVLLQLALTQTKDPKVIQQYFEDF.

An N-terminal signal peptide occupies residues 1–21; sequence MKLTKLALCTLFGLGVSIANA. An Asparaginase/glutaminase domain is found at 25 to 349; sequence PNITILATGG…KVIQQYFEDF (325 aa). Catalysis depends on Thr35, which acts as the O-isoaspartyl threonine intermediate. Substrate is bound by residues Ser81 and 112–113; that span reads TD. Cys100 and Cys128 are joined by a disulfide.

This sequence belongs to the asparaginase 1 family.

It is found in the periplasm. The catalysed reaction is L-asparagine + H2O = L-aspartate + NH4(+). This is Probable L-asparaginase periplasmic (ansB) from Haemophilus influenzae (strain ATCC 51907 / DSM 11121 / KW20 / Rd).